A 273-amino-acid polypeptide reads, in one-letter code: NADPH-dependent 7-cyano-7-deazaguanine reductase (273 aa).

80–82 (VES) provides a ligand contact to substrate. Residue 82–83 (SK) coordinates NADPH. The active-site Thioimide intermediate is cysteine 180. Catalysis depends on aspartate 187, which acts as the Proton donor. Residue 219–220 (HE) coordinates substrate. An NADPH-binding site is contributed by 248-249 (RG).

Belongs to the GTP cyclohydrolase I family. QueF type 2 subfamily. Homodimer.

The protein resides in the cytoplasm. The catalysed reaction is 7-aminomethyl-7-carbaguanine + 2 NADP(+) = 7-cyano-7-deazaguanine + 2 NADPH + 3 H(+). It functions in the pathway tRNA modification; tRNA-queuosine biosynthesis. Catalyzes the NADPH-dependent reduction of 7-cyano-7-deazaguanine (preQ0) to 7-aminomethyl-7-deazaguanine (preQ1). This chain is NADPH-dependent 7-cyano-7-deazaguanine reductase, found in Bordetella pertussis (strain Tohama I / ATCC BAA-589 / NCTC 13251).